A 163-amino-acid chain; its full sequence is Transcription elongation factor GreA (163 aa).

A coiled-coil region spans residues 11-38 (FKQLEKELDRLKKERPGVIQAIKEAREE).

It belongs to the GreA/GreB family.

Its function is as follows. Necessary for efficient RNA polymerase transcription elongation past template-encoded arresting sites. The arresting sites in DNA have the property of trapping a certain fraction of elongating RNA polymerases that pass through, resulting in locked ternary complexes. Cleavage of the nascent transcript by cleavage factors such as GreA or GreB allows the resumption of elongation from the new 3'terminus. GreA releases sequences of 2 to 3 nucleotides. The chain is Transcription elongation factor GreA from Nitratidesulfovibrio vulgaris (strain ATCC 29579 / DSM 644 / CCUG 34227 / NCIMB 8303 / VKM B-1760 / Hildenborough) (Desulfovibrio vulgaris).